The chain runs to 345 residues: Probable aldo-keto reductase 4 (345 aa).

The Proton donor role is filled by Tyr-63. His-130 is a substrate binding site. Position 209–219 (209–219) interacts with NADP(+); sequence SPLGRGFFASG.

It belongs to the aldo/keto reductase family.

This Arabidopsis thaliana (Mouse-ear cress) protein is Probable aldo-keto reductase 4.